The sequence spans 211 residues: Pyridoxine/pyridoxamine 5'-phosphate oxidase (211 aa).

Residues 7-10 and lysine 65 contribute to the substrate site; that span reads RREY. FMN-binding positions include 60–65, 75–76, arginine 81, lysine 82, and glutamine 104; these read RIVLLK and YT. Positions 122, 126, and 130 each coordinate substrate. FMN-binding positions include 139-140 and tryptophan 184; that span reads QS. 190–192 contacts substrate; it reads RLH. FMN is bound at residue arginine 194.

This sequence belongs to the pyridoxamine 5'-phosphate oxidase family. Homodimer. FMN serves as cofactor.

It catalyses the reaction pyridoxamine 5'-phosphate + O2 + H2O = pyridoxal 5'-phosphate + H2O2 + NH4(+). It carries out the reaction pyridoxine 5'-phosphate + O2 = pyridoxal 5'-phosphate + H2O2. It participates in cofactor metabolism; pyridoxal 5'-phosphate salvage; pyridoxal 5'-phosphate from pyridoxamine 5'-phosphate: step 1/1. It functions in the pathway cofactor metabolism; pyridoxal 5'-phosphate salvage; pyridoxal 5'-phosphate from pyridoxine 5'-phosphate: step 1/1. In terms of biological role, catalyzes the oxidation of either pyridoxine 5'-phosphate (PNP) or pyridoxamine 5'-phosphate (PMP) into pyridoxal 5'-phosphate (PLP). In Vibrio parahaemolyticus serotype O3:K6 (strain RIMD 2210633), this protein is Pyridoxine/pyridoxamine 5'-phosphate oxidase.